The primary structure comprises 215 residues: Small ribosomal subunit protein uS3 (215 aa).

A KH type-2 domain is found at 39–107 (VRQYLQKKLA…PVHINIEEIR (69 aa)).

The protein belongs to the universal ribosomal protein uS3 family. As to quaternary structure, part of the 30S ribosomal subunit. Forms a tight complex with proteins S10 and S14.

Its function is as follows. Binds the lower part of the 30S subunit head. Binds mRNA in the 70S ribosome, positioning it for translation. This Nitrosomonas europaea (strain ATCC 19718 / CIP 103999 / KCTC 2705 / NBRC 14298) protein is Small ribosomal subunit protein uS3.